Consider the following 93-residue polypeptide: Guanine nucleotide-binding protein subunit gamma (93 aa).

Residues 1 to 22 (MPQYASRDVGDPSQIKKNKQSM) form a disordered region. Residue cysteine 89 is the site of S-palmitoyl cysteine attachment. Cysteine 90 is modified (cysteine methyl ester). The S-farnesyl cysteine moiety is linked to residue cysteine 90. Residues 91–93 (VVM) constitute a propeptide, removed in mature form.

The protein belongs to the G protein gamma family. As to quaternary structure, g proteins are composed of 3 units, alpha, beta and gamma.

Its subcellular location is the membrane. In Neurospora crassa (strain ATCC 24698 / 74-OR23-1A / CBS 708.71 / DSM 1257 / FGSC 987), this protein is Guanine nucleotide-binding protein subunit gamma (gng-1).